Reading from the N-terminus, the 254-residue chain is Bowman-Birk type bran trypsin inhibitor (254 aa).

Positions 1–22 (MSNTTMATSTILLFLLAGLAAA) are cleaved as a signal peptide. The propeptide occupies 23 to 118 (HGDGDTTIRL…KCTAALDGLS (96 aa)). Repeats lie at residues 46–120 (KPWD…LSME), 121–187 (RPWK…LCTP), and 188–251 (RPWG…CKPR). 10 disulfides stabilise this stretch: Cys-51–Cys-248, Cys-125–Cys-185, Cys-126–Cys-143, Cys-152–Cys-159, Cys-156–Cys-172, Cys-193–Cys-248, Cys-194–Cys-209, Cys-199–Cys-207, Cys-216–Cys-223, and Cys-220–Cys-236. The propeptide occupies 252-254 (AEN).

Belongs to the Bowman-Birk serine protease inhibitor family. As to expression, expressed in roots, leaves and flowers.

This chain is Bowman-Birk type bran trypsin inhibitor (RBBI3.3), found in Oryza sativa subsp. indica (Rice).